A 362-amino-acid chain; its full sequence is Phosphoserine aminotransferase (362 aa).

Residues Ser9 and Arg42 each contribute to the L-glutamate site. Residues 76 to 77, Trp102, Thr153, Asp174, and Gln197 each bind pyridoxal 5'-phosphate; that span reads GR. Residue Lys198 is modified to N6-(pyridoxal phosphate)lysine. 239–240 lines the pyridoxal 5'-phosphate pocket; sequence NT.

This sequence belongs to the class-V pyridoxal-phosphate-dependent aminotransferase family. SerC subfamily. As to quaternary structure, homodimer. Requires pyridoxal 5'-phosphate as cofactor.

It is found in the cytoplasm. It carries out the reaction O-phospho-L-serine + 2-oxoglutarate = 3-phosphooxypyruvate + L-glutamate. The catalysed reaction is 4-(phosphooxy)-L-threonine + 2-oxoglutarate = (R)-3-hydroxy-2-oxo-4-phosphooxybutanoate + L-glutamate. It functions in the pathway amino-acid biosynthesis; L-serine biosynthesis; L-serine from 3-phospho-D-glycerate: step 2/3. The protein operates within cofactor biosynthesis; pyridoxine 5'-phosphate biosynthesis; pyridoxine 5'-phosphate from D-erythrose 4-phosphate: step 3/5. Functionally, catalyzes the reversible conversion of 3-phosphohydroxypyruvate to phosphoserine and of 3-hydroxy-2-oxo-4-phosphonooxybutanoate to phosphohydroxythreonine. This Escherichia coli (strain ATCC 8739 / DSM 1576 / NBRC 3972 / NCIMB 8545 / WDCM 00012 / Crooks) protein is Phosphoserine aminotransferase.